A 132-amino-acid polypeptide reads, in one-letter code: Ribosome-binding factor A (132 aa).

It belongs to the RbfA family. As to quaternary structure, monomer. Binds 30S ribosomal subunits, but not 50S ribosomal subunits or 70S ribosomes.

The protein resides in the cytoplasm. Its function is as follows. One of several proteins that assist in the late maturation steps of the functional core of the 30S ribosomal subunit. Associates with free 30S ribosomal subunits (but not with 30S subunits that are part of 70S ribosomes or polysomes). Required for efficient processing of 16S rRNA. May interact with the 5'-terminal helix region of 16S rRNA. In Caldicellulosiruptor bescii (strain ATCC BAA-1888 / DSM 6725 / KCTC 15123 / Z-1320) (Anaerocellum thermophilum), this protein is Ribosome-binding factor A.